The sequence spans 98 residues: Keratin-associated protein 3-1 (98 aa).

A2 is subject to N-acetylalanine. Tandem repeats lie at residues 3–7 (CCAPR), 8–12 (CCSVR), 47–51 (FCDNS), and 55–59 (YHVPD). A 4 X 5 AA repeats of C-C-X(3) region spans residues 3–59 (CCAPRCCSVRTGPATTICSSDQFCRCGVCLPSTCPHDISLLQPTFCDNSPVPYHVPD).

It belongs to the KRTAP type 3 family. Interacts with wool keratins. As to expression, wool.

In the wool cortex, wool keratin intermediate filaments are embedded in an interfilamentous matrix, consisting of hair keratin-associated proteins (KRTAP), which are essential for the formation of a rigid and resistant wool shaft through their extensive disulfide bond cross-linking with abundant cysteine residues of wool keratins. The matrix proteins include the high-sulfur and high-glycine-tyrosine keratins. The sequence is that of Keratin-associated protein 3-1 (KRTAP3-1) from Capra hircus (Goat).